The following is a 172-amino-acid chain: Phosphopantetheine adenylyltransferase (172 aa).

Residue threonine 14 coordinates substrate. ATP contacts are provided by residues 14–15 (TF) and histidine 22. The substrate site is built by lysine 46, leucine 78, and arginine 92. ATP-binding positions include 93-95 (GLR), glutamate 103, and 128-134 (WLYISST).

This sequence belongs to the bacterial CoaD family. Homohexamer. Mg(2+) serves as cofactor.

The protein localises to the cytoplasm. It carries out the reaction (R)-4'-phosphopantetheine + ATP + H(+) = 3'-dephospho-CoA + diphosphate. The protein operates within cofactor biosynthesis; coenzyme A biosynthesis; CoA from (R)-pantothenate: step 4/5. In terms of biological role, reversibly transfers an adenylyl group from ATP to 4'-phosphopantetheine, yielding dephospho-CoA (dPCoA) and pyrophosphate. In Lawsonia intracellularis (strain PHE/MN1-00), this protein is Phosphopantetheine adenylyltransferase.